A 188-amino-acid chain; its full sequence is Shikimate kinase (188 aa).

An ATP-binding site is contributed by 21–26 (GAGKTT). Thr-25 contacts Mg(2+). Substrate-binding residues include Asp-43, Arg-67, and Gly-90. Residue Arg-130 participates in ATP binding. Arg-148 serves as a coordination point for substrate.

It belongs to the shikimate kinase family. In terms of assembly, monomer. Mg(2+) serves as cofactor.

It localises to the cytoplasm. The enzyme catalyses shikimate + ATP = 3-phosphoshikimate + ADP + H(+). Its pathway is metabolic intermediate biosynthesis; chorismate biosynthesis; chorismate from D-erythrose 4-phosphate and phosphoenolpyruvate: step 5/7. Catalyzes the specific phosphorylation of the 3-hydroxyl group of shikimic acid using ATP as a cosubstrate. The polypeptide is Shikimate kinase (Geobacillus thermodenitrificans (strain NG80-2)).